The sequence spans 355 residues: Protein DVR-1 (355 aa).

An N-terminal signal peptide occupies residues 1-15 (MFLVLLRACLLTLSL). The propeptide occupies 16–240 (CSPAEDDGLV…PLQCRSRRKR (225 aa)). N-linked (GlcNAc...) asparagine glycosylation is found at Asn108, Asn179, and Asn296. 3 cysteine pairs are disulfide-bonded: Cys254–Cys320, Cys283–Cys352, and Cys287–Cys354.

The protein belongs to the TGF-beta family. In terms of assembly, homodimer. Abundant in ovaries and eggs, and equally distributed among all blastomeres.

The protein resides in the secreted. Its function is as follows. Serves to facilitate the differentiation of either mesoderm or endoderm either as a cofactor in an instructive signal or by providing permissive environment. This Danio rerio (Zebrafish) protein is Protein DVR-1 (dvr1).